We begin with the raw amino-acid sequence, 439 residues long: NAD kinase (439 aa).

A phosphoserine mark is found at Ser-46, Ser-48, Ser-50, Ser-55, and Ser-64.

Belongs to the NAD kinase family. It depends on a divalent metal cation as a cofactor.

It catalyses the reaction NAD(+) + ATP = ADP + NADP(+) + H(+). This is NAD kinase (Nadk) from Mus musculus (Mouse).